A 101-amino-acid polypeptide reads, in one-letter code: Gamma-secretase subunit PEN-2 (101 aa).

At Met1–Lys17 the chain is on the cytoplasmic side. The segment at residues Tyr18–Trp36 is an intramembrane region (helical). Topologically, residues Phe37–Val57 are cytoplasmic. A helical transmembrane segment spans residues Trp58–Phe78. The Lumenal segment spans residues Gln79–Pro101.

Belongs to the PEN-2 family. As to quaternary structure, the functional gamma-secretase complex is composed of at least four polypeptides: a presenilin homodimer (PSEN1 or PSEN2), nicastrin (NCSTN), APH1 (APH1A or APH1B) and PSENEN.

The protein localises to the endoplasmic reticulum membrane. It localises to the golgi apparatus. Its subcellular location is the golgi stack membrane. The protein resides in the cell membrane. It is found in the membrane. Functionally, essential subunit of the gamma-secretase complex, an endoprotease complex that catalyzes the intramembrane cleavage of integral membrane proteins such as Notch receptors and APP (amyloid-beta precursor protein). The gamma-secretase complex plays a role in Notch and Wnt signaling cascades and regulation of downstream processes via its role in processing key regulatory proteins, and by regulating cytosolic CTNNB1 levels. PSENEN modulates both endoproteolysis of presenilin and gamma-secretase activity. The protein is Gamma-secretase subunit PEN-2 (Psenen) of Rattus norvegicus (Rat).